Reading from the N-terminus, the 33-residue chain is Brevinin-2Ea (33 aa).

C27 and C33 form a disulfide bridge.

This sequence belongs to the frog skin active peptide (FSAP) family. Brevinin subfamily. Expressed by the skin glands.

The protein resides in the secreted. In terms of biological role, shows antibacterial activity against representative Gram-negative and Gram-positive bacterial species, and hemolytic activity. The polypeptide is Brevinin-2Ea (Pelophylax lessonae (Pool frog)).